We begin with the raw amino-acid sequence, 330 residues long: Protein RfbI (330 aa).

The 2Fe-2S ferredoxin-type domain occupies 3–89; that stretch reads HIIKIFPSNI…ELNAHFFPEL (87 aa). [2Fe-2S] cluster contacts are provided by cysteine 37, cysteine 42, and cysteine 45. Residues 94–192 form the FAD-binding FR-type domain; it reads KKIVPCKVNS…EGPCGTFFIR (99 aa).

Requires [2Fe-2S] cluster as cofactor.

Its pathway is bacterial outer membrane biogenesis; LPS O-antigen biosynthesis. In Salmonella typhimurium (strain LT2 / SGSC1412 / ATCC 700720), this protein is Protein RfbI (rfbI).